We begin with the raw amino-acid sequence, 397 residues long: Elongation factor Tu (397 aa).

A tr-type G domain is found at Leu10 to Glu207. Positions Gly19–Thr26 are G1. Gly19–Thr26 contacts GTP. Thr26 is a Mg(2+) binding site. The tract at residues Gly60–Asn64 is G2. Residues Asp81–Gly84 form a G3 region. GTP contacts are provided by residues Asp81–His85 and Asn136–Asp139. Residues Asn136–Asp139 are G4. A G5 region spans residues Ser174–Arg176.

The protein belongs to the TRAFAC class translation factor GTPase superfamily. Classic translation factor GTPase family. EF-Tu/EF-1A subfamily. As to quaternary structure, monomer.

The protein resides in the cytoplasm. It catalyses the reaction GTP + H2O = GDP + phosphate + H(+). Its function is as follows. GTP hydrolase that promotes the GTP-dependent binding of aminoacyl-tRNA to the A-site of ribosomes during protein biosynthesis. The sequence is that of Elongation factor Tu from Pseudomonas fluorescens (strain Pf0-1).